Consider the following 581-residue polypeptide: Arginine--tRNA ligase (581 aa).

The 'HIGH' region motif lies at 122–132 (PNVAKPMHVGH).

This sequence belongs to the class-I aminoacyl-tRNA synthetase family. In terms of assembly, monomer.

Its subcellular location is the cytoplasm. The enzyme catalyses tRNA(Arg) + L-arginine + ATP = L-arginyl-tRNA(Arg) + AMP + diphosphate. The protein is Arginine--tRNA ligase of Francisella tularensis subsp. tularensis (strain WY96-3418).